We begin with the raw amino-acid sequence, 247 residues long: 1-(5-phosphoribosyl)-5-[(5-phosphoribosylamino)methylideneamino] imidazole-4-carboxamide isomerase (247 aa).

Asp-8 serves as the catalytic Proton acceptor. Catalysis depends on Asp-130, which acts as the Proton donor.

This sequence belongs to the HisA/HisF family.

The protein resides in the cytoplasm. The catalysed reaction is 1-(5-phospho-beta-D-ribosyl)-5-[(5-phospho-beta-D-ribosylamino)methylideneamino]imidazole-4-carboxamide = 5-[(5-phospho-1-deoxy-D-ribulos-1-ylimino)methylamino]-1-(5-phospho-beta-D-ribosyl)imidazole-4-carboxamide. It participates in amino-acid biosynthesis; L-histidine biosynthesis; L-histidine from 5-phospho-alpha-D-ribose 1-diphosphate: step 4/9. In Stutzerimonas stutzeri (strain A1501) (Pseudomonas stutzeri), this protein is 1-(5-phosphoribosyl)-5-[(5-phosphoribosylamino)methylideneamino] imidazole-4-carboxamide isomerase.